Reading from the N-terminus, the 488-residue chain is Lysine--tRNA ligase (488 aa).

Glu398 and Glu405 together coordinate Mg(2+).

Belongs to the class-II aminoacyl-tRNA synthetase family. As to quaternary structure, homodimer. Mg(2+) is required as a cofactor.

It localises to the cytoplasm. The enzyme catalyses tRNA(Lys) + L-lysine + ATP = L-lysyl-tRNA(Lys) + AMP + diphosphate. This chain is Lysine--tRNA ligase, found in Carboxydothermus hydrogenoformans (strain ATCC BAA-161 / DSM 6008 / Z-2901).